Reading from the N-terminus, the 303-residue chain is N-acetyl-D-glucosamine kinase (303 aa).

ATP is bound by residues 4–11 (GFDIGGTK) and 133–140 (GVGGGLIF). Zn(2+) contacts are provided by His-157, Cys-177, Cys-179, and Cys-184.

This sequence belongs to the ROK (NagC/XylR) family. NagK subfamily.

It carries out the reaction N-acetyl-D-glucosamine + ATP = N-acetyl-D-glucosamine 6-phosphate + ADP + H(+). The protein operates within cell wall biogenesis; peptidoglycan recycling. Its function is as follows. Catalyzes the phosphorylation of N-acetyl-D-glucosamine (GlcNAc) derived from cell-wall degradation, yielding GlcNAc-6-P. This is N-acetyl-D-glucosamine kinase from Shigella boydii serotype 4 (strain Sb227).